We begin with the raw amino-acid sequence, 236 residues long: Small ribosomal subunit protein uS2c (236 aa).

Belongs to the universal ribosomal protein uS2 family.

Its subcellular location is the plastid. The protein localises to the chloroplast. The sequence is that of Small ribosomal subunit protein uS2c (rps2) from Lolium perenne (Perennial ryegrass).